Consider the following 404-residue polypeptide: Queuine tRNA-ribosyltransferase catalytic subunit (404 aa).

Catalysis depends on Asp98, which acts as the Proton acceptor. Substrate is bound by residues 98 to 102 (DSGGF), Asp152, Gln195, and Gly222. An RNA binding region spans residues 253–259 (GVGYAED). The active-site Nucleophile is the Asp272. The RNA binding; important for wobble base 34 recognition stretch occupies residues 277–281 (TRTAR). Zn(2+) is bound by residues Cys310, Cys312, Cys315, and His347.

The protein belongs to the queuine tRNA-ribosyltransferase family. Heterodimer of a catalytic subunit and an accessory subunit. It depends on Zn(2+) as a cofactor.

The protein resides in the cytoplasm. The protein localises to the nucleus. The enzyme catalyses guanosine(34) in tRNA + queuine = queuosine(34) in tRNA + guanine. Catalytic subunit of the queuine tRNA-ribosyltransferase (TGT) that catalyzes the base-exchange of a guanine (G) residue with queuine (Q) at position 34 (anticodon wobble position) in tRNAs with GU(N) anticodons (tRNA-Asp, -Asn, -His and -Tyr), resulting in the hypermodified nucleoside queuosine (7-(((4,5-cis-dihydroxy-2-cyclopenten-1-yl)amino)methyl)-7-deazaguanosine). Catalysis occurs through a double-displacement mechanism. The nucleophile active site attacks the C1' of nucleotide 34 to detach the guanine base from the RNA, forming a covalent enzyme-RNA intermediate. The proton acceptor active site deprotonates the incoming queuine, allowing a nucleophilic attack on the C1' of the ribose to form the product. This Schizosaccharomyces pombe (strain 972 / ATCC 24843) (Fission yeast) protein is Queuine tRNA-ribosyltransferase catalytic subunit.